The chain runs to 108 residues: Cytochrome c oxidase subunit 1 (108 aa).

Residues 10 to 30 (AFVAPVLGLLGFIPGGAGGIV) form a helical membrane-spanning segment. His49 is a heme a3 binding site. 2 helical membrane-spanning segments follow: residues 50 to 70 (FHLQ…YWLL) and 85 to 105 (LGLA…VGLH). His51 lines the Fe(II)-heme a pocket.

It belongs to the heme-copper respiratory oxidase family. Heme is required as a cofactor. Cu cation serves as cofactor.

The protein resides in the cell membrane. The enzyme catalyses 4 Fe(II)-[cytochrome c] + O2 + 8 H(+)(in) = 4 Fe(III)-[cytochrome c] + 2 H2O + 4 H(+)(out). It functions in the pathway energy metabolism; oxidative phosphorylation. The protein is Cytochrome c oxidase subunit 1 (cbaA) of Thermus thermophilus.